Here is a 210-residue protein sequence, read N- to C-terminus: Ribosomal RNA large subunit methyltransferase E (210 aa).

Residues Gly-61, Trp-63, Asp-81, Asp-97, and Asp-122 each coordinate S-adenosyl-L-methionine. The active-site Proton acceptor is the Lys-162.

It belongs to the class I-like SAM-binding methyltransferase superfamily. RNA methyltransferase RlmE family.

The protein localises to the cytoplasm. The enzyme catalyses uridine(2552) in 23S rRNA + S-adenosyl-L-methionine = 2'-O-methyluridine(2552) in 23S rRNA + S-adenosyl-L-homocysteine + H(+). Functionally, specifically methylates the uridine in position 2552 of 23S rRNA at the 2'-O position of the ribose in the fully assembled 50S ribosomal subunit. The protein is Ribosomal RNA large subunit methyltransferase E of Xanthomonas campestris pv. campestris (strain 8004).